Reading from the N-terminus, the 900-residue chain is 3'-5' exonuclease DinG (900 aa).

One can recognise an Exonuclease domain in the interval 8 to 161; sequence VVDLETTGNQ…DEDATTTALL (154 aa). In terms of domain architecture, Helicase ATP-binding spans 241–496; it reads SEVVKSLNLT…KAIDKLEQQR (256 aa). Residue 276–283 participates in ATP binding; it reads APLGSGKS. The DEAH box signature appears at 448–451; that stretch reads DEAH. In terms of domain architecture, Helicase C-terminal spans 713 to 893; that stretch reads DYIQEYVTIT…QFSKLVNKIQ (181 aa).

The protein belongs to the helicase family. DinG subfamily. Type 2 sub-subfamily.

In terms of biological role, 3'-5' exonuclease. This Staphylococcus haemolyticus (strain JCSC1435) protein is 3'-5' exonuclease DinG.